The sequence spans 215 residues: Nucleoside triphosphate pyrophosphatase (215 aa).

Aspartate 80 serves as the catalytic Proton acceptor.

Belongs to the Maf family. Requires a divalent metal cation as cofactor.

The protein resides in the cytoplasm. The catalysed reaction is a ribonucleoside 5'-triphosphate + H2O = a ribonucleoside 5'-phosphate + diphosphate + H(+). It catalyses the reaction a 2'-deoxyribonucleoside 5'-triphosphate + H2O = a 2'-deoxyribonucleoside 5'-phosphate + diphosphate + H(+). Its function is as follows. Nucleoside triphosphate pyrophosphatase. May have a dual role in cell division arrest and in preventing the incorporation of modified nucleotides into cellular nucleic acids. The polypeptide is Nucleoside triphosphate pyrophosphatase (Leifsonia xyli subsp. xyli (strain CTCB07)).